A 498-amino-acid chain; its full sequence is Osteoclast stimulatory transmembrane protein (498 aa).

Residues 1–51 (MRTIRAATEHLFGLGWKFWRLGICKAVVPLQAAWKAFSQPVPASCNELLTQ) are Cytoplasmic-facing. Residues 52–72 (LLLCVSLASLIAGLAHHWLVS) traverse the membrane as a helical segment. The Extracellular portion of the chain corresponds to 73-81 (LQLYPLGPP). Residues 82–102 (ALVTSLCGLFVFLSLGLVPPI) traverse the membrane as a helical segment. At 103–121 (RCLFVLSVPTLGSKQGRRL) the chain is on the cytoplasmic side. The chain crosses the membrane as a helical span at residues 122–142 (LLSYSAANLAVAVVPNVLGNV). Over 143–226 (RAAGQVLSCV…LARAALGTQR (84 aa)) the chain is Extracellular. The helical transmembrane segment at 227–247 (VVTGLFLLGLLGESAWYLHRY) threads the bilayer. Topologically, residues 248-303 (LTDLRFDNIYATRQLVRQLAQAGATHLLTSPPPWLLQTAQPKLSREELLSCLLRLG) are cytoplasmic. A helical membrane pass occupies residues 304–324 (LLALLLVATAVTVASDYGAFL). Residues 325–401 (LAQAAVAWAQ…QAQPPRVTAA (77 aa)) lie on the Extracellular side of the membrane. The chain crosses the membrane as a helical span at residues 402 to 422 (LAAGALQLLAGATLVLQAYAW). Residues 423–498 (RLRHTIAASF…DSLGPPYDLE (76 aa)) are Cytoplasmic-facing. The tract at residues 449–498 (QRRHNQSDHLNKQPGTMATRESRKPGQGTRTLESQGPQAHDSLGPPYDLE) is disordered. A compositionally biased stretch (polar residues) spans 476–485 (GTRTLESQGP).

Expressed in osteoclast (at protein level). Ubiquitous. Highly expressed in multi-nuclear osteoclast cells compared to mono-nuclear macrophages. Expressed in foreign body giant cells (FBGCs).

Its subcellular location is the membrane. Probable cell surface receptor that plays a role in cellular fusion and cell differentiation. Cooperates with DCSTAMP in modulating cell-cell fusion in both osteoclasts and foreign body giant cells (FBGCs). Involved in osteoclast bone resorption. Promotes osteoclast differentiation and may play a role in the multinucleated osteoclast maturation. In Mus musculus (Mouse), this protein is Osteoclast stimulatory transmembrane protein (Ocstamp).